Consider the following 224-residue polypeptide: Holliday junction branch migration complex subunit RuvA (224 aa).

A domain I region spans residues 1–67 (MISWLKGEKV…EDGTSLYGFI (67 aa)). The domain II stretch occupies residues 68-146 (EVNQRDLFRE…RFTDNDKTIH (79 aa)). The segment at 147-157 (ENKNDIEANQF) is flexible linker. A domain III region spans residues 157–224 (FSKYIDEIYL…ILMKLSEKST (68 aa)).

This sequence belongs to the RuvA family. Homotetramer. Forms an RuvA(8)-RuvB(12)-Holliday junction (HJ) complex. HJ DNA is sandwiched between 2 RuvA tetramers; dsDNA enters through RuvA and exits via RuvB. An RuvB hexamer assembles on each DNA strand where it exits the tetramer. Each RuvB hexamer is contacted by two RuvA subunits (via domain III) on 2 adjacent RuvB subunits; this complex drives branch migration. In the full resolvosome a probable DNA-RuvA(4)-RuvB(12)-RuvC(2) complex forms which resolves the HJ.

The protein resides in the cytoplasm. In terms of biological role, the RuvA-RuvB-RuvC complex processes Holliday junction (HJ) DNA during genetic recombination and DNA repair, while the RuvA-RuvB complex plays an important role in the rescue of blocked DNA replication forks via replication fork reversal (RFR). RuvA specifically binds to HJ cruciform DNA, conferring on it an open structure. The RuvB hexamer acts as an ATP-dependent pump, pulling dsDNA into and through the RuvAB complex. HJ branch migration allows RuvC to scan DNA until it finds its consensus sequence, where it cleaves and resolves the cruciform DNA. The sequence is that of Holliday junction branch migration complex subunit RuvA from Prochlorococcus marinus (strain NATL2A).